Reading from the N-terminus, the 188-residue chain is VQ motif-containing protein 18 (188 aa).

Disordered regions lie at residues 1–20, 58–92, and 157–188; these read MEIT…VSMN, LTGK…HQPV, and GFIF…HNSS. The VQ signature appears at 51–60; the sequence is FRSLVQSLTG. The span at 161–179 shows a compositional bias: low complexity; that stretch reads NNNNNNNNNNNNNNNNNTN.

The protein resides in the nucleus. Its function is as follows. May function as positive regulator of plant growth. In Arabidopsis thaliana (Mouse-ear cress), this protein is VQ motif-containing protein 18.